A 139-amino-acid chain; its full sequence is Small ribosomal subunit protein uS12 (139 aa).

The segment at 1-44 is disordered; it reads MPTINQLVKKPRTSKVKKSTAPALNKGYNSHKKKATDLASPQKR. Positions 9–18 are enriched in basic residues; sequence KKPRTSKVKK. The residue at position 102 (Asp-102) is a 3-methylthioaspartic acid.

The protein belongs to the universal ribosomal protein uS12 family. Part of the 30S ribosomal subunit. Contacts proteins S8 and S17. May interact with IF1 in the 30S initiation complex.

Its function is as follows. With S4 and S5 plays an important role in translational accuracy. Interacts with and stabilizes bases of the 16S rRNA that are involved in tRNA selection in the A site and with the mRNA backbone. Located at the interface of the 30S and 50S subunits, it traverses the body of the 30S subunit contacting proteins on the other side and probably holding the rRNA structure together. The combined cluster of proteins S8, S12 and S17 appears to hold together the shoulder and platform of the 30S subunit. This chain is Small ribosomal subunit protein uS12, found in Macrococcus caseolyticus (strain JCSC5402) (Macrococcoides caseolyticum).